We begin with the raw amino-acid sequence, 91 residues long: ATP synthase subunit c 2 (91 aa).

2 helical membrane passes run 4-24 (FSMC…GTGI) and 53-73 (IGLA…LIIL).

The protein belongs to the ATPase C chain family. In terms of assembly, F-type ATPases have 2 components, F(1) - the catalytic core - and F(0) - the membrane proton channel. F(1) has five subunits: alpha(3), beta(3), gamma(1), delta(1), epsilon(1). F(0) has three main subunits: a(1), b(2) and c(10-14). The alpha and beta chains form an alternating ring which encloses part of the gamma chain. F(1) is attached to F(0) by a central stalk formed by the gamma and epsilon chains, while a peripheral stalk is formed by the delta and b chains.

The protein localises to the cell inner membrane. Its function is as follows. F(1)F(0) ATP synthase produces ATP from ADP in the presence of a proton or sodium gradient. F-type ATPases consist of two structural domains, F(1) containing the extramembraneous catalytic core and F(0) containing the membrane proton channel, linked together by a central stalk and a peripheral stalk. During catalysis, ATP synthesis in the catalytic domain of F(1) is coupled via a rotary mechanism of the central stalk subunits to proton translocation. In terms of biological role, key component of the F(0) channel; it plays a direct role in translocation across the membrane. A homomeric c-ring of between 10-14 subunits forms the central stalk rotor element with the F(1) delta and epsilon subunits. The chain is ATP synthase subunit c 2 from Pelobacter propionicus (strain DSM 2379 / NBRC 103807 / OttBd1).